Reading from the N-terminus, the 833-residue chain is Leucine--tRNA ligase (833 aa).

Positions 41 to 52 (PYPSGAGLHVGH) match the 'HIGH' region motif. Positions 610-614 (KMSKS) match the 'KMSKS' region motif. Lys613 is an ATP binding site.

Belongs to the class-I aminoacyl-tRNA synthetase family.

The protein localises to the cytoplasm. The enzyme catalyses tRNA(Leu) + L-leucine + ATP = L-leucyl-tRNA(Leu) + AMP + diphosphate. This chain is Leucine--tRNA ligase, found in Streptococcus pyogenes serotype M3 (strain ATCC BAA-595 / MGAS315).